Consider the following 138-residue polypeptide: Isochorismatase-like protein asqB (138 aa).

It belongs to the isochorismatase family.

It catalyses the reaction [(1'E)-5'-(3',3'-dimethyloxiran-2'-yl)-3'-hydroxy-3'-methylpent-1'-en-1'-yl]-quinolinone B = yaequinolone C. It functions in the pathway secondary metabolite biosynthesis. The protein operates within alkaloid biosynthesis. Its pathway is mycotoxin biosynthesis. Functionally, isochorismatase-like protein; part of the gene cluster that mediates the biosynthesis of the aspoquinolone mycotoxins. Within the pathway, asqB converts [(1'E)-5'-(3',3'-dimethyloxiran-2'-yl)-3'-hydroxy-3'-methylpent-1'-en-1'-yl]-quinolinone B into yaequinolone C. The first step of the pathway is catalyzed by the nonribosomal peptide synthetase asqK that condenses anthranilic acid and O-methyl-L-tyrosine to produce 4'-methoxycyclopeptin. 4'-methoxycyclopeptin is then converted to 4'-methoxydehydrocyclopeptin by the ketoglutarate-dependent dioxygenase asqJ. AsqJ also converts its first product 4'-methoxydehydrocyclopeptin to 4'-methoxycyclopenin. The following conversion of 4'-methoxycyclopenin into 4'-methoxyviridicatin is catalyzed by the cyclopenase asqI. 4'-methoxyviridicatin is the precursor of quinolone natural products, and is further converted to quinolinone B. The prenyltransferase asqH1 then catalyzes the canonical Friedel-Crafts alkylation of quinolinone B with dimethylallyl cation to yield dimethylallyl quinolone, which is subjected to FAD-dependent dehydrogenation by the FAD-linked oxidoreductase asqF to yield conjugated aryl diene. The delta(3') double bond then serves as the site of the second alkylation with DMAPP catalyzed by the prenyltransferase asqH2 to yield a carbenium ion intermediate, which can be attacked by H(2)O to yield a styrenyl quinolone containing a C3'-hydroxyprenyl chain. The FAD-dependent monooxygenase asqG performs epoxidation of the terminal C7'-C8' olefin. Finally, after dehydratation of the epoxide at C3 by asqC, the quinolone epoxide rearrangement protein asqO catalyzes an enzymatic 3-exo-tet cyclization to yield the cyclopropyl-THF ring system in aspoquinolone. The sequence is that of Isochorismatase-like protein asqB from Emericella nidulans (strain FGSC A4 / ATCC 38163 / CBS 112.46 / NRRL 194 / M139) (Aspergillus nidulans).